A 131-amino-acid polypeptide reads, in one-letter code: Chromatin accessibility complex protein 1 (131 aa).

At alanine 2 the chain carries N-acetylalanine. Positions 100 to 124 (ASKYLKMLKEEKREEDEENDNDNES) form a coiled coil. An N6-acetyllysine modification is found at lysine 102. The tract at residues 109 to 131 (EEKREEDEENDNDNESDHDEADS) is disordered. A compositionally biased stretch (acidic residues) spans 112–131 (REEDEENDNDNESDHDEADS). The residue at position 124 (serine 124) is a Phosphoserine.

As to quaternary structure, heterodimer with POLE3; binds to DNA. Component of the CHRAC ISWI chromatin remodeling complex at least composed of SMARCA5/SNF2H, BAZ1A/ACF1, CHRAC1 and POLE3; the complex preferentially binds DNA through the CHRAC1-POLE3 heterodimer and possesses ATP-dependent nucleosome-remodeling activity. Within the complex, the heterodimer with POLE3 interacts with SMARCA5/SNF2H; the interaction is direct and enhances nucleosome sliding activity by the SMARCA5/SNF2H and BAZ1A/ACF1 interaction. Within the complex, the heterodimer with POLE3 interacts with BAZ1A/ACF1; the interactions are direct. In terms of tissue distribution, expressed in heart, brain, placenta, lung, liver, skeletal muscle, kidney and pancreas.

It is found in the nucleus. Functionally, forms a complex with DNA polymerase epsilon subunit POLE3 and binds naked DNA, which is then incorporated into chromatin, aided by the nucleosome remodeling activity of ISWI/SNF2H and ACF1. Does not enhance nucleosome sliding activity of the ACF-5 ISWI chromatin remodeling complex. This is Chromatin accessibility complex protein 1 (CHRAC1) from Homo sapiens (Human).